A 190-amino-acid polypeptide reads, in one-letter code: Somatotropin (190 aa).

Residue His19 coordinates Zn(2+). An intrachain disulfide couples Cys52 to Cys163. Ser105 bears the Phosphoserine mark. Glu172 contacts Zn(2+). The cysteines at positions 180 and 188 are disulfide-linked.

The protein belongs to the somatotropin/prolactin family.

The protein localises to the secreted. Its function is as follows. Plays an important role in growth control. Its major role in stimulating body growth is to stimulate the liver and other tissues to secrete IGF1. It stimulates both the differentiation and proliferation of myoblasts. It also stimulates amino acid uptake and protein synthesis in muscle and other tissues. The sequence is that of Somatotropin (GH1) from Vulpes vulpes (Red fox).